The following is a 257-amino-acid chain: Imidazole glycerol phosphate synthase subunit HisF (257 aa).

Residues Asp-12 and Asp-131 contribute to the active site.

Belongs to the HisA/HisF family. As to quaternary structure, heterodimer of HisH and HisF.

It localises to the cytoplasm. The catalysed reaction is 5-[(5-phospho-1-deoxy-D-ribulos-1-ylimino)methylamino]-1-(5-phospho-beta-D-ribosyl)imidazole-4-carboxamide + L-glutamine = D-erythro-1-(imidazol-4-yl)glycerol 3-phosphate + 5-amino-1-(5-phospho-beta-D-ribosyl)imidazole-4-carboxamide + L-glutamate + H(+). The protein operates within amino-acid biosynthesis; L-histidine biosynthesis; L-histidine from 5-phospho-alpha-D-ribose 1-diphosphate: step 5/9. In terms of biological role, IGPS catalyzes the conversion of PRFAR and glutamine to IGP, AICAR and glutamate. The HisF subunit catalyzes the cyclization activity that produces IGP and AICAR from PRFAR using the ammonia provided by the HisH subunit. This is Imidazole glycerol phosphate synthase subunit HisF from Cellvibrio japonicus (strain Ueda107) (Pseudomonas fluorescens subsp. cellulosa).